A 190-amino-acid chain; its full sequence is MSTTPTYNHPVINERSKRMVWVDLEMTGLDISKDVILEMAIVITDAELNVIEKGPNLVIHRSDEVLKNMNDWCIEHHGKSGLTEDVRNSKISLEEAEKIMLEFVRKHTDKGICPLAGNTVHEDRRFLLKEMPTFAEHLHYRIIDVSTIKELSRRWYPYIPSPKKVCGHRALQDIEESIEELKSYRVTVFK.

Residues 19-181 form the Exonuclease domain; the sequence is MVWVDLEMTG…QDIEESIEEL (163 aa). Tyr140 is a catalytic residue.

This sequence belongs to the oligoribonuclease family.

3'-to-5' exoribonuclease specific for small oligoribonucleotides. The chain is Probable oligoribonuclease (rexo2-1) from Dictyostelium discoideum (Social amoeba).